A 176-amino-acid chain; its full sequence is Large ribosomal subunit protein uL6 (176 aa).

This sequence belongs to the universal ribosomal protein uL6 family. In terms of assembly, part of the 50S ribosomal subunit.

This protein binds to the 23S rRNA, and is important in its secondary structure. It is located near the subunit interface in the base of the L7/L12 stalk, and near the tRNA binding site of the peptidyltransferase center. The sequence is that of Large ribosomal subunit protein uL6 from Thiobacillus denitrificans (strain ATCC 25259 / T1).